Reading from the N-terminus, the 49-residue chain is MWAGILEILSAFIRILFKLLYCWALFFTVLKGFSRGPLLPLIYLINKSL.

A helical membrane pass occupies residues 5 to 27 (ILEILSAFIRILFKLLYCWALFF).

It localises to the membrane. This is an uncharacterized protein from Saccharomyces cerevisiae (strain ATCC 204508 / S288c) (Baker's yeast).